The primary structure comprises 1516 residues: Neurite extension and migration factor (1516 aa).

Residues 380 to 405 show a composition bias toward basic and acidic residues; it reads LDKKKGKEEGQEDKGVEKKDGKDNGE. Disordered stretches follow at residues 380-440, 589-610, 1158-1225, 1373-1419, and 1437-1479; these read LDKK…GSFS, QKKK…SQKQ, TFND…STKK, TPQE…PGYN, and LGNN…ESGT. Composition is skewed to polar residues over residues 596–610, 1158–1170, and 1185–1194; these read NTNT…SQKQ, TFND…STNN, and GAMNQSSSQK. A compositionally biased stretch (basic residues) spans 1443–1453; that stretch reads THKKLYRHKSS. Residues 1456–1479 show a composition bias toward basic and acidic residues; it reads ALRDEKCKGKHMEREQVHKDESGT.

In terms of tissue distribution, highly expressed in fetal and adult brain, predominantly in the cerebral cortex and the cerebellum. Also expressed in other tissues but to a lesser extent.

The protein localises to the nucleus. It is found in the cytoplasm. In terms of biological role, involved in neurite outgrowth by regulating cell-cell adhesion via the N-cadherin signaling pathway. May act by regulating expression of protein-coding genes, such as N-cadherins and integrin beta-1 (ITGB1). This chain is Neurite extension and migration factor, found in Homo sapiens (Human).